Consider the following 502-residue polypeptide: TGF-beta-activated kinase 1 and MAP3K7-binding protein 1 (502 aa).

Positions 1 to 21 (MAAQRRSLLQSEQQPSWTDDL) are disordered. Phosphoserine is present on Ser7. Residues 7–17 (SLLQSEQQPSW) show a composition bias toward polar residues. The PPM-type phosphatase domain maps to 28–365 (GVGSASNRSY…EDMTLLVRNF (338 aa)). The O-linked (GlcNAc) serine glycan is linked to Ser393. The segment covering 414–437 (QMVNGSHSASTLDEATPTLTNQSP) has biased composition (polar residues). Residues 414-476 (QMVNGSHSAS…SLPPGEDGRV (63 aa)) form a disordered region. Ser421 is subject to Phosphoserine. Thr429 is subject to Phosphothreonine. At Ser436 the chain carries Phosphoserine. Residues 438–455 (TLTLQSTNTHTQSSSSSS) are compositionally biased toward low complexity. Position 440 is a phosphothreonine (Thr440).

Interacts with XIAP and BIRC7. Interacts with TRAF6 and MAP3K7; during IL-1 signaling. Identified in the TRIKA2 complex composed of MAP3K7, TAB1 and TAB2. Interacts with TRAF6 and MAPK14; these interactions allow MAPK14 autophosphorylation. Interacts with STING1; interaction takes place following cGAMP activation and promotes TAB1 recruitment to the endoplasmic reticulum, triggering MAP3K7/TAK1 activation and STING1 phosphorylation. Post-translationally, phosphorylated at all three sites Ser-421, Thr-429 and Ser-436 by MAPK14 when cells were exposed to cellular stresses, or stimulated with TNF-alpha, IL1 or LPS. These phosphorylations inhibit TAK1 activation by a feedback control mechanism. Dephosphorylated by DUSP14 at Ser-436, leading to TAB1-MAP3K7/TAK1 complex inactivation in T-cells. Ubiquitinated by MAP3K1 with 'Lys-63'-linked polyubiquitin; leading to activation of TAK1 and of JNK and p38 MAP kinases following EGF and TGF-beta stimulation. Ubiquitinated by ITCH with 'Lys-48'-linked polyubiquitin; leading to proteasomal degradation. Ubiquitinated by RNF114 during maternal-to-zygotic transition; leading to degradation. In terms of processing, O-GlcNAcylated at Ser-393 is required for full MAP3K7/TAK1 activation upon stimulation with IL-1 or osmotic stress.

The protein resides in the cytoplasm. The protein localises to the cytosol. It localises to the endoplasmic reticulum membrane. Functionally, key adapter protein that plays an essential role in JNK and NF-kappa-B activation and proinflammatory cytokines production in response to stimulation with TLRs and cytokines. Mechanistically, associates with the catalytic domain of MAP3K7/TAK1 to trigger MAP3K7/TAK1 autophosphorylation leading to its full activation. Similarly, associates with MAPK14 and triggers its autophosphorylation and subsequent activation. In turn, MAPK14 phosphorylates TAB1 and inhibits MAP3K7/TAK1 activation in a feedback control mechanism. Also plays a role in recruiting MAPK14 to the TAK1 complex for the phosphorylation of the TAB2 and TAB3 regulatory subunits. This Mus musculus (Mouse) protein is TGF-beta-activated kinase 1 and MAP3K7-binding protein 1 (Tab1).